Consider the following 144-residue polypeptide: tRNA-specific adenosine deaminase (144 aa).

In terms of domain architecture, CMP/dCMP-type deaminase spans 1-116 (MEQALKQAGI…SNLRYFNSSV (116 aa)). Residue histidine 48 coordinates Zn(2+). The active-site Proton donor is glutamate 50. Zn(2+) contacts are provided by cysteine 78 and cysteine 81.

This sequence belongs to the cytidine and deoxycytidylate deaminase family. In terms of assembly, homodimer. The cofactor is Zn(2+).

The catalysed reaction is adenosine(34) in tRNA + H2O + H(+) = inosine(34) in tRNA + NH4(+). In terms of biological role, catalyzes the deamination of adenosine to inosine at the wobble position 34 of tRNA(Arg2). The protein is tRNA-specific adenosine deaminase of Rickettsia felis (strain ATCC VR-1525 / URRWXCal2) (Rickettsia azadi).